The following is a 445-amino-acid chain: Methyl-CpG-binding domain protein 4-like protein (445 aa).

The active site involves Asp429.

As to expression, isoform 1 and isoform 4: Expressed in leaves and flowers, but not in roots or stems.

The protein localises to the nucleus. In terms of biological role, monofunctional DNA glycosylase targeting U:G and T:G mispairs. Excises uracil derivatives and exhibits a preference for a CpG sequence context, irrespective of the methylation status of the complementary strand. The activity follows a biphasic kinetics, with an initial burst of product accumulation followed by a slower phase. Specifically binds its reaction product. Triggers the base excision repair (BER) pathway. In Arabidopsis thaliana (Mouse-ear cress), this protein is Methyl-CpG-binding domain protein 4-like protein.